A 226-amino-acid polypeptide reads, in one-letter code: MAEEQQKAGHSNGENIIPPEEVAKFLPETVEEGGWEKCWEDGITPWDQGRATPLVVHLVDSSSLPLGRALVPGCGGGHDVVAMASPERFVVGLDISESALEKAAETYGSSPKAKYFTFVKEDFFTWRPNELFDLIFDYVVFCAIEPEMRPAWAKSMYELLKPDGELITLMYPITDHDGGPPYKVAVSTYEDVLVPVGFKAVSIEENPYSIATRKGKEKLGRWKKIN.

Residues Trp35, Trp39, Trp46, and Gly73 each coordinate S-adenosyl-L-methionine. At Ser85 the chain carries Phosphoserine. S-adenosyl-L-methionine-binding positions include Asp94, 122–123 (DF), and Tyr138.

This sequence belongs to the class I-like SAM-binding methyltransferase superfamily. TPMT family. In terms of tissue distribution, ubiquitous.

The catalysed reaction is thiocyanate + S-adenosyl-L-methionine = methyl thiocyanate + S-adenosyl-L-homocysteine. S-adenosyl-L-methionine-dependent methyltransferase. Probably involved in glucosinolate metabolism and defense against phytopathogens. Highly reactive to thiocyanate (NCS(-)) derived from myrosinase-mediated hydrolysis of glucosinolates upon tissue damage. Also accepts halid ions as substrates with a lower affinity. The protein is Thiocyanate methyltransferase 1 (TMT1) of Brassica oleracea (Wild cabbage).